The sequence spans 46 residues: Defensin Tk-AMP-D6.1 (46 aa).

4 disulfides stabilise this stretch: Cys3/Cys46, Cys14/Cys34, Cys20/Cys40, and Cys24/Cys42.

Plant defense peptide. The polypeptide is Defensin Tk-AMP-D6.1 (Triticum kiharae (Wheat)).